Consider the following 259-residue polypeptide: MTIINLKNINLTRNKKEILKDITWKVNPGENWVILGLNGSGKSSLLKLILAEEWKTSGEITVLNTQFGNGEIPKLRKRISVVGSFIAERFQPNIKAENLVYTGKFNSSMLYKPYTDQELDEARQLLRQMGAKSLIGRNYASLSQGEKQVLLIARSLILKPELLILDEATNGLDLFAKEKLLKQLQQINQLKTAPTLIYISHHPDEITDIFTHLLLLREGKVIQSGKKENLLNEKILTDFYQEKVEVHRFEQKYFVIPAN.

Residues Ile-4–Lys-243 enclose the ABC transporter domain. Gly-36–Ser-43 lines the ATP pocket.

This sequence belongs to the ABC transporter superfamily.

This is an uncharacterized protein from Lactococcus lactis subsp. lactis (strain IL1403) (Streptococcus lactis).